We begin with the raw amino-acid sequence, 110 residues long: Secreted RxLR effector protein 89 (110 aa).

An N-terminal signal peptide occupies residues methionine 1–serine 22. Asparagine 29 is a glycosylation site (N-linked (GlcNAc...) asparagine). Residues arginine 61–arginine 74 carry the RxLR-dEER motif.

This sequence belongs to the RxLR effector family.

It localises to the secreted. Its subcellular location is the host nucleus. It is found in the host cytoplasm. Its function is as follows. Secreted effector that completely suppresses the host cell death induced by cell death-inducing proteins. The polypeptide is Secreted RxLR effector protein 89 (Plasmopara viticola (Downy mildew of grapevine)).